Here is a 295-residue protein sequence, read N- to C-terminus: Protoheme IX farnesyltransferase (295 aa).

The next 9 helical transmembrane spans lie at 27 to 47 (IMYL…GNIH), 48 to 68 (PFIG…AGAI), 93 to 115 (IARS…VMMI), 119 to 136 (YLSG…SLVY), 147 to 167 (NIVI…TSVT), 175 to 195 (LILF…LSLL), 219 to 239 (IYIL…GIFL), 247 to 267 (TCAI…FVSI), and 275 to 295 (MFTY…ISSF).

The protein belongs to the UbiA prenyltransferase family. Protoheme IX farnesyltransferase subfamily.

Its subcellular location is the cell inner membrane. It carries out the reaction heme b + (2E,6E)-farnesyl diphosphate + H2O = Fe(II)-heme o + diphosphate. It participates in porphyrin-containing compound metabolism; heme O biosynthesis; heme O from protoheme: step 1/1. Converts heme B (protoheme IX) to heme O by substitution of the vinyl group on carbon 2 of heme B porphyrin ring with a hydroxyethyl farnesyl side group. In Ehrlichia chaffeensis (strain ATCC CRL-10679 / Arkansas), this protein is Protoheme IX farnesyltransferase.